A 130-amino-acid polypeptide reads, in one-letter code: Small ribosomal subunit protein uS11c (130 aa).

Belongs to the universal ribosomal protein uS11 family. In terms of assembly, part of the 30S ribosomal subunit.

The protein localises to the plastid. It localises to the chloroplast. In Nephroselmis olivacea (Green alga), this protein is Small ribosomal subunit protein uS11c.